Reading from the N-terminus, the 244-residue chain is Small ribosomal subunit protein uS2 (244 aa).

This sequence belongs to the universal ribosomal protein uS2 family.

The protein is Small ribosomal subunit protein uS2 of Halalkalibacterium halodurans (strain ATCC BAA-125 / DSM 18197 / FERM 7344 / JCM 9153 / C-125) (Bacillus halodurans).